The following is a 95-amino-acid chain: Opiscorpine-2 (95 aa).

The signal sequence occupies residues 1-19 (MNNKLTALIFHGLLAIASC). One can recognise a BetaSPN-type CS-alpha/beta domain in the interval 55–95 (EFMCMANMDPTGSCETHCQKASGEKGYCHGTKCKCGVPLSY). Intrachain disulfides connect Cys58–Cys82, Cys68–Cys87, and Cys72–Cys89.

It belongs to the long chain scorpion toxin family. Class 3 subfamily. Expressed by the venom gland.

The protein resides in the secreted. Functionally, has antimicrobial activity against yeasts and bacteria. In Opistophthalmus carinatus (African yellow leg scorpion), this protein is Opiscorpine-2.